The following is a 440-amino-acid chain: L-seryl-tRNA(Sec) selenium transferase (440 aa).

At Lys-282 the chain carries N6-(pyridoxal phosphate)lysine.

It belongs to the SelA family. Pyridoxal 5'-phosphate is required as a cofactor.

It is found in the cytoplasm. It carries out the reaction L-seryl-tRNA(Sec) + selenophosphate + H(+) = L-selenocysteinyl-tRNA(Sec) + phosphate. It functions in the pathway aminoacyl-tRNA biosynthesis; selenocysteinyl-tRNA(Sec) biosynthesis; selenocysteinyl-tRNA(Sec) from L-seryl-tRNA(Sec) (bacterial route): step 1/1. Functionally, converts seryl-tRNA(Sec) to selenocysteinyl-tRNA(Sec) required for selenoprotein biosynthesis. In Campylobacter jejuni subsp. jejuni serotype O:6 (strain 81116 / NCTC 11828), this protein is L-seryl-tRNA(Sec) selenium transferase.